Reading from the N-terminus, the 1419-residue chain is Agglutinin-like protein 5 (1419 aa).

Positions 1 to 17 (MIQQFTLLFLYLSFATA) are cleaved as a signal peptide. 4 disulfides stabilise this stretch: C73-C150, C96-C112, C205-C298, and C227-C256. ALS repeat units lie at residues 365 to 396 (TTIT…VDVP), 401 to 432 (TTVT…VQVP), 438 to 469 (TTTT…VREP), 474 to 505 (VTTT…VREP), 510 to 541 (VTTT…VREP), 546 to 577 (VTTT…VKEP), 582 to 613 (VTTT…VREP), and 618 to 649 (VTTT…IHDP). Disordered stretches follow at residues 652 to 752 (ESSS…SSSS) and 864 to 885 (ASSF…SSDQ). N-linked (GlcNAc...) asparagine glycosylation occurs at N665. N919 carries an N-linked (GlcNAc...) asparagine glycan. Disordered stretches follow at residues 926–966 (SESE…DSST), 981–1035 (TGMP…TKSS), 1051–1093 (TSTL…KESS), 1134–1177 (EDNE…TTDV), and 1211–1252 (ATSL…NRLS). Composition is skewed to low complexity over residues 928–942 (SESS…ASES), 951–966 (SEST…DSST), and 993–1011 (TSDV…PTSA). Residues 1012 to 1022 (EQSITDNPNID) show a composition bias toward polar residues. Low complexity-rich tracts occupy residues 1023-1035 (SSQT…TKSS) and 1051-1078 (TSTL…GNIN). Polar residues-rich tracts occupy residues 1079 to 1093 (AGSS…KESS) and 1138 to 1160 (PNTF…SVLS). Low complexity predominate over residues 1212-1230 (TSLRSTSSSSNHATESSGT). N1301 and N1326 each carry an N-linked (GlcNAc...) asparagine glycan. S1398 is lipidated: GPI-anchor amidated serine. Positions 1399-1419 (SATKHPSWLLKFISVALFFFL) are cleaved as a propeptide — removed in mature form.

The protein belongs to the ALS family. Forms homodimers through the tandem repeats. Aggregates in amyloid-like structures, with self-propagating secondary-structure changes, amyloid-characteristic dye binding, and induced birefringence. In terms of processing, N-glycosylated and O-glycosylated. The GPI-anchor is attached to the protein in the endoplasmic reticulum and serves to target the protein to the cell surface. There, the glucosamine-inositol phospholipid moiety is cleaved off and the GPI-modified mannoprotein is covalently attached via its lipidless GPI glycan remnant to the 1,6-beta-glucan of the outer cell wall layer.

Its subcellular location is the cell membrane. The protein resides in the secreted. The protein localises to the cell wall. Cell surface adhesion protein which mediates both yeast-to-host tissue adherence and yeast aggregation. Plays an important role in the pathogenesis of C.albicans infections. Forms amyloid structures, essential for cell-cell association and cell-substrate adhesion to polystyrene. The sequence is that of Agglutinin-like protein 5 (ALS5) from Candida albicans (Yeast).